The following is a 304-amino-acid chain: Porphobilinogen deaminase (304 aa).

Residue Cys240 is modified to S-(dipyrrolylmethanemethyl)cysteine.

Belongs to the HMBS family. In terms of assembly, monomer. Dipyrromethane is required as a cofactor.

It carries out the reaction 4 porphobilinogen + H2O = hydroxymethylbilane + 4 NH4(+). Its pathway is porphyrin-containing compound metabolism; protoporphyrin-IX biosynthesis; coproporphyrinogen-III from 5-aminolevulinate: step 2/4. Functionally, tetrapolymerization of the monopyrrole PBG into the hydroxymethylbilane pre-uroporphyrinogen in several discrete steps. The chain is Porphobilinogen deaminase from Xanthomonas euvesicatoria pv. vesicatoria (strain 85-10) (Xanthomonas campestris pv. vesicatoria).